The following is a 396-amino-acid chain: Putative glycosyltransferase HOC1 (396 aa).

Topologically, residues Ala2–Arg13 are cytoplasmic. Residues Leu14–His34 form a helical; Signal-anchor for type II membrane protein membrane-spanning segment. Over Asn35–Lys396 the chain is Lumenal. Asn37 is a glycosylation site (N-linked (GlcNAc...) asparagine).

The protein belongs to the glycosyltransferase 32 family. In terms of assembly, component of the M-Pol II complex composed of ANP1, MNN9, MNN10, MNN11 and HOC1.

The protein localises to the golgi apparatus. The protein resides in the cis-Golgi network membrane. Its function is as follows. The M-Pol II complex possesses alpha-1,6-mannosyltransferase activity and is probably involved in the elongation of the mannan backbone of N-linked glycans on cell wall and periplasmic proteins. In Saccharomyces cerevisiae (strain ATCC 204508 / S288c) (Baker's yeast), this protein is Putative glycosyltransferase HOC1 (HOC1).